Here is a 426-residue protein sequence, read N- to C-terminus: Histidine--tRNA ligase (426 aa).

It belongs to the class-II aminoacyl-tRNA synthetase family.

The protein localises to the cytoplasm. The enzyme catalyses tRNA(His) + L-histidine + ATP = L-histidyl-tRNA(His) + AMP + diphosphate + H(+). The polypeptide is Histidine--tRNA ligase (Saccharolobus shibatae (strain ATCC 51178 / DSM 5389 / JCM 8931 / NBRC 15437 / B12) (Sulfolobus shibatae)).